The sequence spans 127 residues: uncharacterized protein (127 aa).

Disordered regions lie at residues 1 to 22 and 53 to 106; these read MLPA…KMKG and LVGK…PGPK. A compositionally biased stretch (basic and acidic residues) spans 76–95; it reads PNGEAHAEQARRKISVEEKQ.

Its subcellular location is the mitochondrion. This is an uncharacterized protein from Arabidopsis thaliana (Mouse-ear cress).